The following is a 309-amino-acid chain: HPr kinase/phosphorylase (309 aa).

Active-site residues include His-138 and Lys-159. Residue 153 to 160 coordinates ATP; sequence GASGIGKS. Residue Ser-160 coordinates Mg(2+). The active-site Proton acceptor; for phosphorylation activity. Proton donor; for dephosphorylation activity is Asp-177. The tract at residues 201 to 210 is important for the catalytic mechanism of both phosphorylation and dephosphorylation; sequence IEIRGVGIID. Residue Glu-202 coordinates Mg(2+). Arg-243 is a catalytic residue. The tract at residues 264–269 is important for the catalytic mechanism of dephosphorylation; it reads PVKTGR.

It belongs to the HPrK/P family. As to quaternary structure, homohexamer. Mg(2+) serves as cofactor.

It carries out the reaction [HPr protein]-L-serine + ATP = [HPr protein]-O-phospho-L-serine + ADP + H(+). The enzyme catalyses [HPr protein]-O-phospho-L-serine + phosphate + H(+) = [HPr protein]-L-serine + diphosphate. In terms of biological role, catalyzes the ATP- as well as the pyrophosphate-dependent phosphorylation of a specific serine residue in HPr, a phosphocarrier protein of the phosphoenolpyruvate-dependent sugar phosphotransferase system (PTS). HprK/P also catalyzes the pyrophosphate-producing, inorganic phosphate-dependent dephosphorylation (phosphorolysis) of seryl-phosphorylated HPr (P-Ser-HPr). The two antagonistic activities of HprK/P are regulated by several intracellular metabolites, which change their concentration in response to the absence or presence of rapidly metabolisable carbon sources (glucose, fructose, etc.) in the growth medium. Therefore, by controlling the phosphorylation state of HPr, HPrK/P is a sensor enzyme that plays a major role in the regulation of carbon metabolism and sugar transport: it mediates carbon catabolite repression (CCR), and regulates PTS-catalyzed carbohydrate uptake and inducer exclusion. This is HPr kinase/phosphorylase from Lactococcus lactis subsp. lactis (strain IL1403) (Streptococcus lactis).